A 325-amino-acid polypeptide reads, in one-letter code: Beta-ketoacyl-[acyl-carrier-protein] synthase III (325 aa).

Residues Cys-119 and His-252 contribute to the active site. The tract at residues 253 to 257 (QANIR) is ACP-binding. Residue Asn-282 is part of the active site.

It belongs to the thiolase-like superfamily. FabH family. In terms of assembly, homodimer.

It localises to the cytoplasm. The enzyme catalyses malonyl-[ACP] + acetyl-CoA + H(+) = 3-oxobutanoyl-[ACP] + CO2 + CoA. It functions in the pathway lipid metabolism; fatty acid biosynthesis. Catalyzes the condensation reaction of fatty acid synthesis by the addition to an acyl acceptor of two carbons from malonyl-ACP. Catalyzes the first condensation reaction which initiates fatty acid synthesis and may therefore play a role in governing the total rate of fatty acid production. Possesses both acetoacetyl-ACP synthase and acetyl transacylase activities. Its substrate specificity determines the biosynthesis of branched-chain and/or straight-chain of fatty acids. This is Beta-ketoacyl-[acyl-carrier-protein] synthase III from Paracidovorax citrulli (strain AAC00-1) (Acidovorax citrulli).